A 509-amino-acid polypeptide reads, in one-letter code: tRNA-2-methylthio-N(6)-dimethylallyladenosine synthase (509 aa).

Positions 1–15 are enriched in polar residues; the sequence is MNEQQRLASQQVNSS. Positions 1–26 are disordered; that stretch reads MNEQQRLASQQVNSSTKKEEKDYSKY. Positions 16-25 are enriched in basic and acidic residues; the sequence is TKKEEKDYSK. The MTTase N-terminal domain occupies 66 to 184; the sequence is RKFYIRTYGC…LPYILKDAMF (119 aa). Positions 75, 111, 145, 221, 225, and 228 each coordinate [4Fe-4S] cluster. The Radical SAM core domain maps to 207–437; sequence RRGDIKAWVN…NALVNKLAIE (231 aa). In terms of domain architecture, TRAM spans 440–503; it reads NRYKGQIVEV…TWSLNGELVE (64 aa).

The protein belongs to the methylthiotransferase family. MiaB subfamily. In terms of assembly, monomer. It depends on [4Fe-4S] cluster as a cofactor.

It is found in the cytoplasm. The catalysed reaction is N(6)-dimethylallyladenosine(37) in tRNA + (sulfur carrier)-SH + AH2 + 2 S-adenosyl-L-methionine = 2-methylsulfanyl-N(6)-dimethylallyladenosine(37) in tRNA + (sulfur carrier)-H + 5'-deoxyadenosine + L-methionine + A + S-adenosyl-L-homocysteine + 2 H(+). In terms of biological role, catalyzes the methylthiolation of N6-(dimethylallyl)adenosine (i(6)A), leading to the formation of 2-methylthio-N6-(dimethylallyl)adenosine (ms(2)i(6)A) at position 37 in tRNAs that read codons beginning with uridine. In Bacillus cereus (strain AH187), this protein is tRNA-2-methylthio-N(6)-dimethylallyladenosine synthase.